The following is a 291-amino-acid chain: Fructose-1,6-bisphosphatase class 1 1 (291 aa).

The Mg(2+) site is built by E78, D95, L97, and D98. Substrate is bound by residues 98-101 (DGSS), Y203, and K233. E239 provides a ligand contact to Mg(2+).

This sequence belongs to the FBPase class 1 family. As to quaternary structure, homotetramer. The cofactor is Mg(2+).

It localises to the cytoplasm. It catalyses the reaction beta-D-fructose 1,6-bisphosphate + H2O = beta-D-fructose 6-phosphate + phosphate. The protein operates within carbohydrate biosynthesis; gluconeogenesis. This Haloarcula marismortui (strain ATCC 43049 / DSM 3752 / JCM 8966 / VKM B-1809) (Halobacterium marismortui) protein is Fructose-1,6-bisphosphatase class 1 1.